The following is a 596-amino-acid chain: CRISPR-associated DNA-binding protein Cas12m (596 aa).

The recognition domain (REC1-N) stretch occupies residues 19 to 53 (EVLRQQLWLAHNLREDLVSLQLAYDDDLKAIWSSY). The tract at residues 54–121 (PDVAQAEDTM…RDAIAVVKDD (68 aa)) is recognition domain (REC2). Coiled-coil stretches lie at residues 55 to 83 (DVAQ…ARIE) and 91 to 117 (TELT…AIAV). The interval 122–190 (AAERRKARSD…LRHHRFDGSG (69 aa)) is recognition domain (REC1-C). Residues 191–302 (TIAVQLQRQA…RAKLCVTARI (112 aa)) form a wedge domain (WED) region. A linker region spans residues 303–313 (GDTEPVTSGPT). Positions 314-541 (VALHLGWRST…RDGVPVTIVA (228 aa)) are ruvC-I. His-317 is a binding site for Mg(2+). The target nucleic-acid binding (TNB) stretch occupies residues 541 to 577 (AAADFTRTHSRCGHVNPADDRYLSNPVRCDGCGAMYD). Zn(2+)-binding residues include His-549, Cys-552, Cys-569, and Cys-572. The ruvC-II stretch occupies residues 578 to 596 (QDRSFVTLMLRAATAPSNP). A Mg(2+)-binding site is contributed by Asp-579.

Belongs to the CRISPR-associated DNA-binding protein Cas12m family. In terms of assembly, binds crRNA and target dsDNA as a monomer. Requires Mg(2+) as cofactor. Zn(2+) serves as cofactor.

Functionally, CRISPR (clustered regularly interspaced short palindromic repeat), is an adaptive immune system that provides protection against mobile genetic elements (viruses, transposable elements and conjugative plasmids). CRISPR clusters contain sequences complementary to antecedent mobile elements and target invading nucleic acids. CRISPR clusters are transcribed and processed into CRISPR RNA (crRNA). Recognizes a short motif in the CRISPR repeat sequences (the 5' PAM or protospacer adjacent motif, 5'-TTN-3' in this organism) to help distinguish self versus nonself, as targets within the bacterial CRISPR locus do not have PAMs. Upon expression in E.coli as a CRISPR locus inhibits plasmid propagation when targeted to regions essential for plasmid propagation (replication origin and dnaA). The crRNA-Cas12m complex inhibits transcription from target DNA leading to gene silencing. Cas12m-crRNA binds DNA in a PAM-dependent, crRNA-guided fashion. Binds a 17-bp crRNA-ss-target DNA heteroduplex, in a 56 nucleotide crRNA. No dsDNA, ssDNA or RNA nuclease activity is seen for the crRNA-Cas12m complex. Is required to process pre-crRNA to mature crRNA without a tracrRNA. Upon expression in E.coli as a CRISPR region preferentially binds to its associated crRNA. The polypeptide is CRISPR-associated DNA-binding protein Cas12m (Mycolicibacterium mucogenicum (Mycobacterium mucogenicum)).